A 91-amino-acid chain; its full sequence is UPF0223 protein SAB0963 (91 aa).

It belongs to the UPF0223 family.

The chain is UPF0223 protein SAB0963 from Staphylococcus aureus (strain bovine RF122 / ET3-1).